Here is a 342-residue protein sequence, read N- to C-terminus: UDP-3-O-acylglucosamine N-acyltransferase (342 aa).

The active-site Proton acceptor is H234.

This sequence belongs to the transferase hexapeptide repeat family. LpxD subfamily. As to quaternary structure, homotrimer.

The catalysed reaction is a UDP-3-O-[(3R)-3-hydroxyacyl]-alpha-D-glucosamine + a (3R)-hydroxyacyl-[ACP] = a UDP-2-N,3-O-bis[(3R)-3-hydroxyacyl]-alpha-D-glucosamine + holo-[ACP] + H(+). Its pathway is bacterial outer membrane biogenesis; LPS lipid A biosynthesis. Its function is as follows. Catalyzes the N-acylation of UDP-3-O-acylglucosamine using 3-hydroxyacyl-ACP as the acyl donor. Is involved in the biosynthesis of lipid A, a phosphorylated glycolipid that anchors the lipopolysaccharide to the outer membrane of the cell. The chain is UDP-3-O-acylglucosamine N-acyltransferase from Oleidesulfovibrio alaskensis (strain ATCC BAA-1058 / DSM 17464 / G20) (Desulfovibrio alaskensis).